Consider the following 319-residue polypeptide: Ribosomal RNA small subunit methyltransferase H (319 aa).

S-adenosyl-L-methionine is bound by residues 52-54 (GGH), Asp70, Phe100, Asp126, and Gln133. The disordered stretch occupies residues 289–319 (PKPLSPSELERQRNPRARSAKLRVAARSSQM).

It belongs to the methyltransferase superfamily. RsmH family.

It is found in the cytoplasm. The enzyme catalyses cytidine(1402) in 16S rRNA + S-adenosyl-L-methionine = N(4)-methylcytidine(1402) in 16S rRNA + S-adenosyl-L-homocysteine + H(+). Functionally, specifically methylates the N4 position of cytidine in position 1402 (C1402) of 16S rRNA. This Synechococcus sp. (strain JA-2-3B'a(2-13)) (Cyanobacteria bacterium Yellowstone B-Prime) protein is Ribosomal RNA small subunit methyltransferase H.